Consider the following 229-residue polypeptide: Cytidylate kinase (229 aa).

12 to 20 provides a ligand contact to ATP; it reads GPSGSGKGT.

This sequence belongs to the cytidylate kinase family. Type 1 subfamily.

It localises to the cytoplasm. It carries out the reaction CMP + ATP = CDP + ADP. The enzyme catalyses dCMP + ATP = dCDP + ADP. This Pseudomonas syringae pv. tomato (strain ATCC BAA-871 / DC3000) protein is Cytidylate kinase.